We begin with the raw amino-acid sequence, 200 residues long: Recombination protein RecR (200 aa).

The segment at 57 to 72 (CQECRTFTEQDVCHIC) adopts a C4-type zinc-finger fold. The region spanning 81–176 (GQLCVVESPA…TASRIAHGVP (96 aa)) is the Toprim domain.

This sequence belongs to the RecR family.

In terms of biological role, may play a role in DNA repair. It seems to be involved in an RecBC-independent recombinational process of DNA repair. It may act with RecF and RecO. The chain is Recombination protein RecR from Vibrio cholerae serotype O1 (strain ATCC 39541 / Classical Ogawa 395 / O395).